We begin with the raw amino-acid sequence, 213 residues long: Probable transaldolase (213 aa).

The active-site Schiff-base intermediate with substrate is the K83.

The protein belongs to the transaldolase family. Type 3B subfamily.

Its subcellular location is the cytoplasm. It carries out the reaction D-sedoheptulose 7-phosphate + D-glyceraldehyde 3-phosphate = D-erythrose 4-phosphate + beta-D-fructose 6-phosphate. It participates in carbohydrate degradation; pentose phosphate pathway; D-glyceraldehyde 3-phosphate and beta-D-fructose 6-phosphate from D-ribose 5-phosphate and D-xylulose 5-phosphate (non-oxidative stage): step 2/3. Its function is as follows. Transaldolase is important for the balance of metabolites in the pentose-phosphate pathway. This is Probable transaldolase from Syntrophomonas wolfei subsp. wolfei (strain DSM 2245B / Goettingen).